The sequence spans 641 residues: Homeobox protein ceh-38 (641 aa).

Polar residues-rich tracts occupy residues 1 to 14 and 28 to 38; these read MESS…TNGT and DPSSTFINNTG. Disordered stretches follow at residues 1-79 and 129-244; these read MESS…TSSA and LHVD…GDRM. The segment covering 52–79 has biased composition (low complexity); sequence TISPHPITPSASTSSATSATEEPATSSA. The span at 131–140 shows a compositional bias: basic and acidic residues; the sequence is VDSRRRESHD. Composition is skewed to polar residues over residues 167–183 and 190–204; these read TPTN…SSLL and NTIG…TFGS. Residues 308–394 constitute a DNA-binding region (CUT); it reads NAEIGDDIYI…TRLAILDMKT (87 aa). Disordered regions lie at residues 398–428, 485–508, and 552–641; these read NRAS…PVSK, GGNI…VGDT, and FGVS…LAAN. Residues 427–486 constitute a DNA-binding region (homeobox); it reads SKRPRLVFTDIQKRTLQAIFKETQRPSREMQQTIAEHLRLDLSTVANFFMNARRRSRLGG. Residues 571–604 are compositionally biased toward acidic residues; the sequence is HEDDEELDELNDSELAYEEDVEIGDEEEEDEEQA. Residues 613–626 are compositionally biased toward basic and acidic residues; the sequence is KVEELEEKTVIKEE.

Belongs to the CUT homeobox family. As to expression, expressed in the embryo. After gastrulation, expressed in almost all cells. During larval and adult stages, expressed in the dorsal and ventral nerve cord, head and tail neurons, pharynx, gut and head.

It is found in the nucleus. Functionally, probable DNA-binding regulatory protein involved in cell-fate specification. The polypeptide is Homeobox protein ceh-38 (ceh-38) (Caenorhabditis elegans).